The following is a 200-amino-acid chain: Putative biotin transporter BioYB (200 aa).

Transmembrane regions (helical) follow at residues 13–33 (LIGM…VAPF), 36–56 (VAGI…LLLG), 61–81 (AIAM…FAQF), 90–110 (GKSG…GWFL), 121–141 (FLIA…TYMY), and 158–178 (WGFM…LSFI).

The protein belongs to the BioY family.

It is found in the cell membrane. In terms of biological role, putative biotin transporter. The chain is Putative biotin transporter BioYB (bioYB) from Bacillus subtilis (strain 168).